The chain runs to 148 residues: Large ribosomal subunit protein bL9 (148 aa).

This sequence belongs to the bacterial ribosomal protein bL9 family.

Its function is as follows. Binds to the 23S rRNA. The sequence is that of Large ribosomal subunit protein bL9 from Hahella chejuensis (strain KCTC 2396).